Here is a 683-residue protein sequence, read N- to C-terminus: Cyclic nucleotide-gated channel alpha-1 (683 aa).

At 1-160 (MKTNIINTWH…PSGNMYYNWL (160 aa)) the chain is on the cytoplasmic side. The disordered stretch occupies residues 34–144 (ACSSFSDNDN…PKEKKEEEKK (111 aa)). The segment covering 105-144 (SKADDKKESKKDPEKKKKKEKEKEKKKEEKPKEKKEEEKK) has biased composition (basic and acidic residues). The chain crosses the membrane as a helical span at residues 161–182 (FCITLPVMYNWTMIIARACFDE). Residues 183-192 (LQSDYLEYWL) are Extracellular-facing. The helical transmembrane segment at 193 to 213 (IFDYVSDVVYLADMFVRTRTG) threads the bilayer. Residues 214-238 (YLEQGLLVKDELKLIEKYKANLQFK) are Cytoplasmic-facing. Residues 239-257 (LDVLSVIPTDLLYFKFGWN) traverse the membrane as a helical segment. The Extracellular segment spans residues 258–262 (YPEIR). The helical transmembrane segment at 263–281 (LNRLLRISRMFEFFQRTET) threads the bilayer. Residues 282–288 (RTNYPNI) lie on the Cytoplasmic side of the membrane. The interval 286 to 394 (PNIFRISNLV…GNIGSMISNM (109 aa)) is ion conduction pathway. Residues 289–312 (FRISNLVMYIVIIIHWNACVYYSI) form a helical membrane-spanning segment. Residues 313 to 335 (SKAIGFGNDTWVYPDVNDPEFGR) are Extracellular-facing. An N-linked (GlcNAc...) asparagine glycan is attached at asparagine 320. Transmembrane regions (helical) follow at residues 336–370 (LARK…VFVV) and 371–395 (VDFL…SNMN). Residues 353–356 (TIGE) are selectivity filter. The interval 396–472 (AARAEFQSRV…DTLKKVRIFA (77 aa)) is C-linker. The Cytoplasmic portion of the chain corresponds to 396–683 (AARAEFQSRV…ESEPTESLQG (288 aa)). The tract at residues 476–596 (AGLLVELVLK…EEKGRQILMK (121 aa)) is cyclic nucleotide-binding domain. 3',5'-cyclic GMP is bound by residues glycine 536, serine 539, arginine 552, and threonine 553. Residues arginine 552 and threonine 553 each contribute to the 3',5'-cyclic AMP site. Residues 614-668 (LEEKVTRMEGSVDLLQTRFARILAEYESMQQKLKQRLTKVEKFLKPLIETEFSAL) are a coiled coil.

Belongs to the cyclic nucleotide-gated cation channel (TC 1.A.1.5) family. CNGA1 subfamily. As to quaternary structure, forms heterotetrameric channels composed of CNGA1 and CNGB1 subunits with 3:1 stoichiometry. May also form cyclic nucleotide-activated homotetrameric channels, that are efficiently activated by saturating cGMP, but poorly activated by saturating cAMP compared to the heterotetramer with CNGB1. The channel binds Ca(2+)-bound CALM1 via CaM1 and CaM2 regions of the CNGB1 subunit; this interaction modulates the affinity of the channel for cNMPs in response to intracellular Ca(2+) levels. Rod cells in the retina.

The protein localises to the cell membrane. The enzyme catalyses Ca(2+)(in) = Ca(2+)(out). It catalyses the reaction Na(+)(in) = Na(+)(out). It carries out the reaction K(+)(in) = K(+)(out). The catalysed reaction is NH4(+)(in) = NH4(+)(out). The enzyme catalyses Rb(+)(in) = Rb(+)(out). It catalyses the reaction Li(+)(in) = Li(+)(out). It carries out the reaction Cs(+)(in) = Cs(+)(out). Functionally, pore-forming subunit of the rod cyclic nucleotide-gated channel. Mediates rod photoresponses at dim light converting transient changes in intracellular cGMP levels into electrical signals. In the dark, cGMP levels are high and keep the channel open enabling a steady inward current carried by Na(+) and Ca(2+) ions that leads to membrane depolarization and neurotransmitter release from synaptic terminals. Upon photon absorption cGMP levels decline leading to channel closure and membrane hyperpolarization that ultimately slows neurotransmitter release and signals the presence of light, the end point of the phototransduction cascade. Conducts cGMP- and cAMP-gated ion currents, with permeability for monovalent and divalent cations. The selectivity for Ca(2+) over Na(+) increases with cGMP concentrations, whereas the selectivity among monovalent ions is independent of the cGMP levels. The polypeptide is Cyclic nucleotide-gated channel alpha-1 (Rattus norvegicus (Rat)).